The following is a 288-amino-acid chain: Transposase for insertion sequence element IS1106 (288 aa).

Belongs to the transposase 11 family.

Involved in the transposition of the insertion sequence. In Neisseria meningitidis serogroup B, this protein is Transposase for insertion sequence element IS1106.